Reading from the N-terminus, the 255-residue chain is Pimeloyl-[acyl-carrier protein] methyl ester esterase (255 aa).

Residues 16-242 enclose the AB hydrolase-1 domain; the sequence is LVLLHGWGLN…AAHAPFISHP (227 aa). Substrate contacts are provided by residues tryptophan 22, 82–83, and 143–147; these read SL and FLALQ. Serine 82 functions as the Nucleophile in the catalytic mechanism. Active-site residues include aspartate 207 and histidine 235. Histidine 235 contacts substrate.

The protein belongs to the AB hydrolase superfamily. Carboxylesterase BioH family. As to quaternary structure, monomer.

The protein resides in the cytoplasm. The catalysed reaction is 6-carboxyhexanoyl-[ACP] methyl ester + H2O = 6-carboxyhexanoyl-[ACP] + methanol + H(+). The protein operates within cofactor biosynthesis; biotin biosynthesis. Its function is as follows. The physiological role of BioH is to remove the methyl group introduced by BioC when the pimeloyl moiety is complete. It allows to synthesize pimeloyl-ACP via the fatty acid synthetic pathway through the hydrolysis of the ester bonds of pimeloyl-ACP esters. This chain is Pimeloyl-[acyl-carrier protein] methyl ester esterase, found in Pectobacterium carotovorum subsp. carotovorum (strain PC1).